The following is a 492-amino-acid chain: Aerolysin-3 (492 aa).

An N-terminal signal peptide occupies residues 1–23 (MKKLKITGLSLIISGLLMAQAQA). 2 disulfides stabilise this stretch: C42/C98 and C182/C187. The interval 68–84 (WQISGLANGWVIMGPGY) is interaction with host N-linked glycan. Positions 256 to 288 (YGLSEKVTTKNKFKWPLVGETELSIEIAANQSW) are part of the transmembrane beta-barrel after proteolytic activation of the toxin and insertion into the host membrane. Residues 346–355 (RWGGNAWYTH) are interaction with glycans from host GPI-anchor. Residues 446-492 (AAASHSSRARNLSAGQGLRLEIPLDAQELSGLGFNNVSLSVTPAANQ) constitute a propeptide that is removed on maturation.

It belongs to the aerolysin family. Homodimer in solution; homoheptamer in the host membrane. After binding to GPI-anchored proteins in target membranes and proteolytic removal of the C-terminal propeptide, the protein assembles into a heptameric pre-pore complex. A further conformation change leads to insertion into the host membrane. In terms of processing, proteolytic cleavage and subsequent release of the propeptide trigger a major conformation change, leading to the formation of a heptameric pre-pore that then inserts into the host membrane.

The protein resides in the secreted. The protein localises to the host cell membrane. Secreted, cytolytic toxin that forms pores in host membranes after proteolytic removal of a C-terminal propeptide, leading to destruction of the membrane permeability barrier and cell death. The pores are formed by transmembrane beta-strands and are approximately 3 nm in diameter. The polypeptide is Aerolysin-3 (ahh3) (Aeromonas hydrophila).